Consider the following 505-residue polypeptide: L-arabinose isomerase (505 aa).

E308, E335, H352, and H453 together coordinate Mn(2+).

Belongs to the arabinose isomerase family. Requires Mn(2+) as cofactor.

The catalysed reaction is beta-L-arabinopyranose = L-ribulose. It participates in carbohydrate degradation; L-arabinose degradation via L-ribulose; D-xylulose 5-phosphate from L-arabinose (bacterial route): step 1/3. In terms of biological role, catalyzes the conversion of L-arabinose to L-ribulose. The sequence is that of L-arabinose isomerase from Bifidobacterium animalis subsp. lactis (strain AD011).